Here is a 159-residue protein sequence, read N- to C-terminus: Keratin-associated protein 9-8 (159 aa).

Repeat copies occupy residues 8 to 12 (CCQPT), 13 to 17 (CCRTT), 32 to 36 (CCQPS), 37 to 41 (CCVSS), 46 to 50 (CCRPT), 51 to 55 (CCQNT), 56 to 60 (CCQPI), 65 to 69 (CCQPS), 70 to 74 (CCSTP), 75 to 79 (CCQPT), 80 to 84 (CCGQT), 129 to 133 (CCRPA), 134 to 138 (CCETT), 139 to 142 (CCRT), and 153 to 157 (CCQPS). Residues 8–157 (CCQPTCCRTT…TCVSSCCQPS (150 aa)) are 15 X 5 AA repeats of C-C-[RQVSGE]-[SPSNQ]-[TASPI].

Belongs to the KRTAP type 9 family. Interacts with hair keratins.

In terms of biological role, in the hair cortex, hair keratin intermediate filaments are embedded in an interfilamentous matrix, consisting of hair keratin-associated proteins (KRTAP), which are essential for the formation of a rigid and resistant hair shaft through their extensive disulfide bond cross-linking with abundant cysteine residues of hair keratins. The matrix proteins include the high-sulfur and high-glycine-tyrosine keratins. The chain is Keratin-associated protein 9-8 (KRTAP9-8) from Homo sapiens (Human).